A 254-amino-acid chain; its full sequence is MKYSILGLTALSFVASAAAHTLVWGVWVNGVDQGDGRNIYIRSPPNNNPVKNLTSPDMTCNVDNRVVPKSVPVNAGDTLTFEWYHNTRDDDIIASSHHGPIAVYIAPAASNGQGNVWVKLFEDAYNVTNSTWAVDRLITAHGQHSVVVPHVAPGDYLFRAEIIALHEADSLYSQNPIRGAQFYISCAQITINSSDDSTPLPAGVPFPGAYTDSTPGIQFNIYTTPATSYVAPPPSVWSGALGGSIAQVGDASLE.

The first 19 residues, 1–19 (MKYSILGLTALSFVASAAA), serve as a signal peptide directing secretion. H20 is a Cu(2+) binding site. A Methylhistidine modification is found at H20. Residue V28 participates in (1,4-beta-D-glucosyl)n binding. A glycan (N-linked (GlcNAc...) asparagine) is linked at N52. A disulfide bridge connects residues C60 and C186. V66, V67, D77, and N86 together coordinate (1,4-beta-D-glucosyl)n. Cu(2+) is bound at residue H97. The N-linked (GlcNAc...) asparagine glycan is linked to N129. V148 and R159 together coordinate (1,4-beta-D-glucosyl)n. O2 contacts are provided by H166 and Q181. Residue Y183 participates in Cu(2+) binding.

It belongs to the polysaccharide monooxygenase AA9 family. The cofactor is Cu(2+). Post-translationally, the catalytically essential N-terminal histidine His-20 is post-translationally modified by methylation to prevent protonation of the histidine side chain, and protect the critical active site of the enzyme from oxidative damage.

Its subcellular location is the secreted. The enzyme catalyses [(1-&gt;4)-beta-D-glucosyl]n+m + reduced acceptor + O2 = 4-dehydro-beta-D-glucosyl-[(1-&gt;4)-beta-D-glucosyl]n-1 + [(1-&gt;4)-beta-D-glucosyl]m + acceptor + H2O.. Its activity is regulated as follows. The polyphenol cinnamtannin B1 contained in methanolic extract of Cinnamomum cassia (cinnamon) acts as an inhibitor of catalytic activity. In terms of biological role, lytic polysaccharide monooxygenase (LPMO) that depolymerizes crystalline and amorphous polysaccharides via the oxidation of scissile alpha- or beta-(1-4)-glycosidic bonds, yielding C1 or C4 oxidation product. Catalysis by LPMOs requires the reduction of the active-site copper from Cu(II) to Cu(I) by a reducing agent and H(2)O(2) or O(2) as a cosubstrate. Is able to cleave phosphoric acid swollen cellulose (PASC) in the presence of a reducing agent, yielding a range of cellooligosaccharides dominated by cellobiose and cellotriose. Activity is less sensitive to the reducing agent potential when cleaving xylan, suggesting that distinct catalytic mechanisms exist for xylan and glucan cleavage. This chain is AA9 family lytic polysaccharide monooxygenase A, found in Panus similis (Lentinoid fungus).